Consider the following 303-residue polypeptide: Probable cell division protein WhiA (303 aa).

Residues serine 272–leucine 303 constitute a DNA-binding region (H-T-H motif).

This sequence belongs to the WhiA family.

Involved in cell division and chromosome segregation. The sequence is that of Probable cell division protein WhiA from Streptococcus gordonii (strain Challis / ATCC 35105 / BCRC 15272 / CH1 / DL1 / V288).